The chain runs to 157 residues: Ribonuclease H (157 aa).

Positions 4 to 146 constitute an RNase H type-1 domain; the sequence is KRTEITIYTD…CDKLAVKASQ (143 aa). Mg(2+) contacts are provided by Asp13, Glu51, Asp73, and Asp138.

Belongs to the RNase H family. Monomer. Mg(2+) is required as a cofactor.

The protein localises to the cytoplasm. The catalysed reaction is Endonucleolytic cleavage to 5'-phosphomonoester.. Functionally, endonuclease that specifically degrades the RNA of RNA-DNA hybrids. This is Ribonuclease H from Trichodesmium erythraeum (strain IMS101).